The chain runs to 106 residues: Urease subunit beta (106 aa).

This sequence belongs to the urease beta subunit family. As to quaternary structure, heterotrimer of UreA (gamma), UreB (beta) and UreC (alpha) subunits. Three heterotrimers associate to form the active enzyme.

It is found in the cytoplasm. The enzyme catalyses urea + 2 H2O + H(+) = hydrogencarbonate + 2 NH4(+). The protein operates within nitrogen metabolism; urea degradation; CO(2) and NH(3) from urea (urease route): step 1/1. This is Urease subunit beta from Prochlorococcus marinus (strain MIT 9301).